The following is a 100-amino-acid chain: Urease subunit gamma (100 aa).

Belongs to the urease gamma subunit family. Heterotrimer of UreA (gamma), UreB (beta) and UreC (alpha) subunits. Three heterotrimers associate to form the active enzyme.

The protein localises to the cytoplasm. The catalysed reaction is urea + 2 H2O + H(+) = hydrogencarbonate + 2 NH4(+). The protein operates within nitrogen metabolism; urea degradation; CO(2) and NH(3) from urea (urease route): step 1/1. In Prochlorococcus marinus (strain AS9601), this protein is Urease subunit gamma.